A 367-amino-acid polypeptide reads, in one-letter code: Peptide chain release factor 2 (367 aa).

Gln-254 carries the N5-methylglutamine modification.

The protein belongs to the prokaryotic/mitochondrial release factor family. Methylated by PrmC. Methylation increases the termination efficiency of RF2.

It localises to the cytoplasm. Functionally, peptide chain release factor 2 directs the termination of translation in response to the peptide chain termination codons UGA and UAA. The sequence is that of Peptide chain release factor 2 from Neisseria meningitidis serogroup A / serotype 4A (strain DSM 15465 / Z2491).